The sequence spans 127 residues: Fumarate reductase subunit C (127 aa).

The next 3 membrane-spanning stretches (helical) occupy residues 30–50 (ATVL…GSLV), 67–87 (IVVA…QTFF), and 107–127 (VVVL…LVIV).

Belongs to the FrdC family. Part of an enzyme complex containing four subunits: a flavoprotein (FrdA), an iron-sulfur protein (FrdB), and two hydrophobic anchor proteins (FrdC and FrdD).

The protein resides in the cell inner membrane. Functionally, anchors the catalytic components of the fumarate reductase complex to the cell membrane, binds quinones. This chain is Fumarate reductase subunit C, found in Aliivibrio fischeri (strain ATCC 700601 / ES114) (Vibrio fischeri).